The sequence spans 157 residues: Transcription elongation factor GreB (157 aa).

This sequence belongs to the GreA/GreB family. GreB subfamily.

Its function is as follows. Necessary for efficient RNA polymerase transcription elongation past template-encoded arresting sites. The arresting sites in DNA have the property of trapping a certain fraction of elongating RNA polymerases that pass through, resulting in locked ternary complexes. Cleavage of the nascent transcript by cleavage factors such as GreA or GreB allows the resumption of elongation from the new 3'terminus. GreB releases sequences of up to 9 nucleotides in length. This is Transcription elongation factor GreB from Salmonella typhi.